We begin with the raw amino-acid sequence, 167 residues long: MALGLEDKKAIVAEVSEAAKGALSAVAADSRGVTVAKMTALRQSAREAGVYMRVVRNTLLTRAVEGSDFECMKDVFVGPTLIAFSNEHPGAAARLFKEFAKGNDKFSIKGGAFQGEFIPAAQIDRLATLPTYEEAIAKLMATMKEASAGKLVRTLAALRDKKEAEAA.

Belongs to the universal ribosomal protein uL10 family. As to quaternary structure, part of the ribosomal stalk of the 50S ribosomal subunit. The N-terminus interacts with L11 and the large rRNA to form the base of the stalk. The C-terminus forms an elongated spine to which L12 dimers bind in a sequential fashion forming a multimeric L10(L12)X complex.

Functionally, forms part of the ribosomal stalk, playing a central role in the interaction of the ribosome with GTP-bound translation factors. The chain is Large ribosomal subunit protein uL10 from Tolumonas auensis (strain DSM 9187 / NBRC 110442 / TA 4).